Consider the following 251-residue polypeptide: Maleate isomerase (251 aa).

Substrate is bound by residues asparagine 14, 76-78 (CLV), tyrosine 133, and asparagine 163. Cysteine 76 functions as the Nucleophile in the catalytic mechanism. Cysteine 76 is modified (S-(2-succinyl)cysteine). The Proton donor role is filled by cysteine 194. 195–196 (VQ) contacts substrate.

This sequence belongs to the maleate isomerase family. Homodimer.

The enzyme catalyses maleate = fumarate. Functionally, catalyzes cis-trans isomerization of the C2-C3 double bond in maleate to yield fumarate. Shows a strict specificity for maleate, with no activity detected toward structurally related substrates including citraconate, mesaconate, dimethylmaleate, and maleamide. This Nocardia farcinica (strain IFM 10152) protein is Maleate isomerase.